The following is a 178-amino-acid chain: Large ribosomal subunit protein uL6 (178 aa).

This sequence belongs to the universal ribosomal protein uL6 family. In terms of assembly, part of the 50S ribosomal subunit.

Functionally, this protein binds to the 23S rRNA, and is important in its secondary structure. It is located near the subunit interface in the base of the L7/L12 stalk, and near the tRNA binding site of the peptidyltransferase center. The chain is Large ribosomal subunit protein uL6 from Helicobacter pylori (strain J99 / ATCC 700824) (Campylobacter pylori J99).